The sequence spans 906 residues: Protein translocase subunit SecA (906 aa).

ATP-binding positions include Q87, 105-109 (GEGKT), and D512. Residues 879-906 (REGEKIGRNDPCPCGSGQKYKQCHGKLS) form a disordered region. 4 residues coordinate Zn(2+): C890, C892, C901, and H902.

This sequence belongs to the SecA family. Monomer and homodimer. Part of the essential Sec protein translocation apparatus which comprises SecA, SecYEG and auxiliary proteins SecDF-YajC and YidC. Zn(2+) is required as a cofactor.

Its subcellular location is the cell inner membrane. It localises to the cytoplasm. The catalysed reaction is ATP + H2O + cellular proteinSide 1 = ADP + phosphate + cellular proteinSide 2.. Its function is as follows. Part of the Sec protein translocase complex. Interacts with the SecYEG preprotein conducting channel. Has a central role in coupling the hydrolysis of ATP to the transfer of proteins into and across the cell membrane, serving both as a receptor for the preprotein-SecB complex and as an ATP-driven molecular motor driving the stepwise translocation of polypeptide chains across the membrane. The protein is Protein translocase subunit SecA of Shewanella frigidimarina (strain NCIMB 400).